The following is a 253-amino-acid chain: Phycocyanobilin:ferredoxin oxidoreductase (253 aa).

The protein belongs to the HY2 family.

It carries out the reaction (2R,3Z)-phycocyanobilin + 4 oxidized [2Fe-2S]-[ferredoxin] = biliverdin IXalpha + 4 reduced [2Fe-2S]-[ferredoxin] + 4 H(+). In terms of biological role, catalyzes the four-electron reduction of biliverdin IX-alpha (2-electron reduction at both the A and D rings); the reaction proceeds via an isolatable 2-electron intermediate, 181,182-dihydrobiliverdin. The polypeptide is Phycocyanobilin:ferredoxin oxidoreductase (pcyA) (Gloeobacter violaceus (strain ATCC 29082 / PCC 7421)).